We begin with the raw amino-acid sequence, 543 residues long: Malate synthase (543 aa).

This sequence belongs to the malate synthase family. In terms of assembly, homodimer.

The protein resides in the cytoplasm. It catalyses the reaction glyoxylate + acetyl-CoA + H2O = (S)-malate + CoA + H(+). It functions in the pathway carbohydrate metabolism; glyoxylate cycle; (S)-malate from isocitrate: step 2/2. This Streptomyces arenae protein is Malate synthase (aceB).